A 409-amino-acid chain; its full sequence is Type II methyltransferase M.BsuFI (409 aa).

Residues 101 to 402 (LTFIDLFAGI…GAMKERLLLA (302 aa)) form the SAM-dependent MTase C5-type domain. C170 is an active-site residue.

This sequence belongs to the class I-like SAM-binding methyltransferase superfamily. C5-methyltransferase family.

It catalyses the reaction a 2'-deoxycytidine in DNA + S-adenosyl-L-methionine = a 5-methyl-2'-deoxycytidine in DNA + S-adenosyl-L-homocysteine + H(+). A methylase, recognizes the double-stranded sequence 5'-CCGG-3', methylates C-1 on both strands, and protects the DNA from cleavage by the BsuFI endonuclease. The chain is Type II methyltransferase M.BsuFI (hsdFM) from Bacillus subtilis.